The chain runs to 654 residues: Fructose-1,6-bisphosphatase class 3 (654 aa).

The disordered stretch occupies residues 288–307 (NPAFKPKKRPDKHERLTQRE). A compositionally biased stretch (basic and acidic residues) spans 298 to 307 (DKHERLTQRE).

It belongs to the FBPase class 3 family. It depends on Mn(2+) as a cofactor.

The enzyme catalyses beta-D-fructose 1,6-bisphosphate + H2O = beta-D-fructose 6-phosphate + phosphate. It participates in carbohydrate biosynthesis; gluconeogenesis. The protein is Fructose-1,6-bisphosphatase class 3 of Staphylococcus aureus (strain MRSA252).